A 240-amino-acid polypeptide reads, in one-letter code: Small ribosomal subunit protein uS2c (240 aa).

It belongs to the universal ribosomal protein uS2 family.

It is found in the plastid. The protein resides in the chloroplast. This is Small ribosomal subunit protein uS2c (rps2) from Euglena gracilis.